The chain runs to 357 residues: Probable GTP 3',8-cyclase (357 aa).

Residues 5–234 (DFGRDVSGVR…DRRRYWVSSR (230 aa)) enclose the Radical SAM core domain. A GTP-binding site is contributed by arginine 14. [4Fe-4S] cluster contacts are provided by cysteine 21 and cysteine 25. Tyrosine 27 serves as a coordination point for S-adenosyl-L-methionine. Residue cysteine 28 coordinates [4Fe-4S] cluster. GTP is bound at residue lysine 68. Position 72 (glycine 72) interacts with S-adenosyl-L-methionine. Threonine 96 lines the GTP pocket. S-adenosyl-L-methionine is bound at residue serine 120. Lysine 157 provides a ligand contact to GTP. The disordered stretch occupies residues 232–256 (SSRDAGSTADDAAQSVTPDGGAHPD). The [4Fe-4S] cluster site is built by cysteine 272 and cysteine 275. 277-279 (RVR) contacts GTP. Cysteine 289 is a binding site for [4Fe-4S] cluster.

Belongs to the radical SAM superfamily. MoaA family. It depends on [4Fe-4S] cluster as a cofactor.

It carries out the reaction GTP + AH2 + S-adenosyl-L-methionine = (8S)-3',8-cyclo-7,8-dihydroguanosine 5'-triphosphate + 5'-deoxyadenosine + L-methionine + A + H(+). It functions in the pathway cofactor biosynthesis; molybdopterin biosynthesis. In terms of biological role, catalyzes the cyclization of GTP to (8S)-3',8-cyclo-7,8-dihydroguanosine 5'-triphosphate. The polypeptide is Probable GTP 3',8-cyclase (Halobacterium salinarum (strain ATCC 29341 / DSM 671 / R1)).